We begin with the raw amino-acid sequence, 356 residues long: S-adenosylmethionine:tRNA ribosyltransferase-isomerase (356 aa).

Belongs to the QueA family. Monomer.

The protein localises to the cytoplasm. It catalyses the reaction 7-aminomethyl-7-carbaguanosine(34) in tRNA + S-adenosyl-L-methionine = epoxyqueuosine(34) in tRNA + adenine + L-methionine + 2 H(+). The protein operates within tRNA modification; tRNA-queuosine biosynthesis. Its function is as follows. Transfers and isomerizes the ribose moiety from AdoMet to the 7-aminomethyl group of 7-deazaguanine (preQ1-tRNA) to give epoxyqueuosine (oQ-tRNA). The sequence is that of S-adenosylmethionine:tRNA ribosyltransferase-isomerase from Enterobacter sp. (strain 638).